The sequence spans 87 residues: Small ribosomal subunit protein bS20 (87 aa).

This sequence belongs to the bacterial ribosomal protein bS20 family.

Functionally, binds directly to 16S ribosomal RNA. This Corynebacterium jeikeium (strain K411) protein is Small ribosomal subunit protein bS20.